Reading from the N-terminus, the 172-residue chain is Peptide methionine sulfoxide reductase MsrA 1 (172 aa).

Cysteine 14 is a catalytic residue.

This sequence belongs to the MsrA Met sulfoxide reductase family.

The enzyme catalyses L-methionyl-[protein] + [thioredoxin]-disulfide + H2O = L-methionyl-(S)-S-oxide-[protein] + [thioredoxin]-dithiol. The catalysed reaction is [thioredoxin]-disulfide + L-methionine + H2O = L-methionine (S)-S-oxide + [thioredoxin]-dithiol. Has an important function as a repair enzyme for proteins that have been inactivated by oxidation. Catalyzes the reversible oxidation-reduction of methionine sulfoxide in proteins to methionine. This is Peptide methionine sulfoxide reductase MsrA 1 (msrA1) from Mesorhizobium japonicum (strain LMG 29417 / CECT 9101 / MAFF 303099) (Mesorhizobium loti (strain MAFF 303099)).